A 182-amino-acid chain; its full sequence is Epoxyqueuosine reductase QueH (182 aa).

Residues cysteine 10, cysteine 11, cysteine 85, and cysteine 88 each contribute to the [4Fe-4S] cluster site. The cysteines at positions 165 and 167 are disulfide-linked.

It belongs to the QueH family.

It catalyses the reaction epoxyqueuosine(34) in tRNA + AH2 = queuosine(34) in tRNA + A + H2O. The protein operates within tRNA modification; tRNA-queuosine biosynthesis. Functionally, catalyzes the conversion of epoxyqueuosine (oQ) to queuosine (Q), which is a hypermodified base found in the wobble positions of tRNA(Asp), tRNA(Asn), tRNA(His) and tRNA(Tyr). The protein is Epoxyqueuosine reductase QueH of Dehalococcoides mccartyi (strain ATCC BAA-2266 / KCTC 15142 / 195) (Dehalococcoides ethenogenes (strain 195)).